Reading from the N-terminus, the 182-residue chain is Acireductone dioxygenase (182 aa).

The Fe(2+) site is built by His-100, His-102, Glu-106, and His-145. His-100, His-102, Glu-106, and His-145 together coordinate Ni(2+).

The protein belongs to the acireductone dioxygenase (ARD) family. In terms of assembly, monomer. Fe(2+) serves as cofactor. The cofactor is Ni(2+).

It catalyses the reaction 1,2-dihydroxy-5-(methylsulfanyl)pent-1-en-3-one + O2 = 3-(methylsulfanyl)propanoate + CO + formate + 2 H(+). The enzyme catalyses 1,2-dihydroxy-5-(methylsulfanyl)pent-1-en-3-one + O2 = 4-methylsulfanyl-2-oxobutanoate + formate + 2 H(+). It participates in amino-acid biosynthesis; L-methionine biosynthesis via salvage pathway; L-methionine from S-methyl-5-thio-alpha-D-ribose 1-phosphate: step 5/6. Catalyzes 2 different reactions between oxygen and the acireductone 1,2-dihydroxy-3-keto-5-methylthiopentene (DHK-MTPene) depending upon the metal bound in the active site. Fe-containing acireductone dioxygenase (Fe-ARD) produces formate and 2-keto-4-methylthiobutyrate (KMTB), the alpha-ketoacid precursor of methionine in the methionine recycle pathway. Ni-containing acireductone dioxygenase (Ni-ARD) produces methylthiopropionate, carbon monoxide and formate, and does not lie on the methionine recycle pathway. The chain is Acireductone dioxygenase from Nostoc sp. (strain PCC 7120 / SAG 25.82 / UTEX 2576).